Here is a 309-residue protein sequence, read N- to C-terminus: ATP synthase gamma chain (309 aa).

This sequence belongs to the ATPase gamma chain family. F-type ATPases have 2 components, CF(1) - the catalytic core - and CF(0) - the membrane proton channel. CF(1) has five subunits: alpha(3), beta(3), gamma(1), delta(1), epsilon(1). CF(0) has three main subunits: a, b and c.

It is found in the cell membrane. Its function is as follows. Produces ATP from ADP in the presence of a proton gradient across the membrane. The gamma chain is believed to be important in regulating ATPase activity and the flow of protons through the CF(0) complex. The protein is ATP synthase gamma chain of Mycobacterium sp. (strain JLS).